A 69-amino-acid chain; its full sequence is DNA-directed RNA polymerase subunit epsilon (69 aa).

The protein belongs to the RNA polymerase subunit epsilon family. As to quaternary structure, RNAP is composed of a core of 2 alpha, a beta and a beta' subunit. The core is associated with a delta subunit, and at least one of epsilon or omega. When a sigma factor is associated with the core the holoenzyme is formed, which can initiate transcription.

The catalysed reaction is RNA(n) + a ribonucleoside 5'-triphosphate = RNA(n+1) + diphosphate. In terms of biological role, a non-essential component of RNA polymerase (RNAP). This chain is DNA-directed RNA polymerase subunit epsilon, found in Listeria welshimeri serovar 6b (strain ATCC 35897 / DSM 20650 / CCUG 15529 / CIP 8149 / NCTC 11857 / SLCC 5334 / V8).